A 215-amino-acid polypeptide reads, in one-letter code: uncharacterized protein (215 aa).

Disordered regions lie at residues 1–144 (MPKG…PYLR) and 156–215 (IQGH…GAPA). Composition is skewed to low complexity over residues 16-29 (ASTP…ASPT), 49-58 (SSSWPKSPIK), 85-96 (SGSSSPGPSSSR), and 104-127 (STAA…RAAP).

This is an uncharacterized protein from Homo sapiens (Human).